The sequence spans 186 residues: Hydra actinoporin-like toxin 5 (186 aa).

The first 20 residues, 1-20, serve as a signal peptide directing secretion; it reads MLLYVCLVNLLLQSPSGVDS. Positions 158–160 match the Cell attachment site motif; it reads RDG.

It belongs to the actinoporin family. HALT subfamily. Octamer or nonamer in membranes. Monomer in the soluble state. In vitro, interacts with folate receptor alpha (of target organism).

It localises to the nematocyst. It is found in the secreted. The protein localises to the target cell membrane. Pore-forming protein that forms hydrophilic pores and causes cytolysis. Compared to equinatoxin-2 (AC P61914), it reveals lower cytolysis activity (5-12-fold difference, tested on erythrocytes), a larger pore size (probably 2-3 nm) and different affinity to membrane lipids (100-fold lower affinity to sphingomyelin). Binds to sulfatides (SFT) as well as to the two sphingolipids, lysophosphatidic acid (LPA) and sphingosine-1-phosphate (S1P). It seems to bind more strongly to LPA than to S1P and SFT. Shows cytolytic activity on HeLa cells, with a different potency than its paralogs (from most potent to less potent: HALT-4&gt;HALT-6~HALT-1&gt;HALT-3&gt;HALT-7&gt;HALT-2). Pore formation is a multi-step process that involves specific recognition of membrane lipid by a protein aromatic residues rich region, firm binding to the membrane (mainly driven by hydrophobic interactions) accompanied by the transfer of the N-terminal region to the lipid-water interface and finally pore formation after oligomerization of monomers. In vitro, binds to the folate receptor alpha (FOLR1), a GPI-anchored membrane protein that plays a major role in the uptake of folate/folic acid into cells via endocytosis, suggesting a possible involvement of this receptor in the mechanism of HALT-1-induced cell lysis. In vivo, does not cause visible paralysis in larvae of the blowfly Sarcophaga faculata, the most common arthropod prey of Hydra. This chain is Hydra actinoporin-like toxin 5, found in Hydra vulgaris (Hydra).